The chain runs to 130 residues: Small ribosomal subunit protein uS9 (130 aa).

This sequence belongs to the universal ribosomal protein uS9 family.

The chain is Small ribosomal subunit protein uS9 from Carboxydothermus hydrogenoformans (strain ATCC BAA-161 / DSM 6008 / Z-2901).